Here is a 23-residue protein sequence, read N- to C-terminus: Paralytic peptide 2 (23 aa).

Cysteine 7 and cysteine 19 are oxidised to a cystine.

The protein belongs to the GBP/PSP1/paralytic peptide family. Hemolymph.

Functionally, causes rapid, rigid paralysis when injected into Lepidopteran larvae. The physiological role may be to reduce hemolymph loss following injury and promote wound healing. In Spodoptera exigua (Beet armyworm), this protein is Paralytic peptide 2.